We begin with the raw amino-acid sequence, 354 residues long: L-Lys-D/L-Arg epimerase (354 aa).

Residues threonine 135 and 160–162 (KIK) contribute to the substrate site. 3 residues coordinate Mg(2+): aspartate 190, glutamate 215, and aspartate 240. Substrate contacts are provided by residues lysine 265, aspartate 295, and 318–320 (DLD).

Belongs to the mandelate racemase/muconate lactonizing enzyme family. Mg(2+) serves as cofactor.

Catalyzes the epimerization of L-Lys-L-Arg to L-Lys-D-Arg (in vitro). Catalyzes the epimerization of positively charged dipeptides, with a preference for substrates with a basic amino acid in the second position. Has epimerase activity with L-Lys-L-Lys, L-Arg-L-Arg, L-Val-L-Arg, L-Val-L-Lys and L-Ala-L-Arg (in vitro). The polypeptide is L-Lys-D/L-Arg epimerase (Desulforapulum autotrophicum (strain ATCC 43914 / DSM 3382 / VKM B-1955 / HRM2) (Desulfobacterium autotrophicum)).